A 277-amino-acid polypeptide reads, in one-letter code: Outer membrane lipoprotein 1 (277 aa).

The first 19 residues, 1 to 19, serve as a signal peptide directing secretion; the sequence is MSFKKILGVALVSALALTA. Residue Cys20 is the site of N-palmitoyl cysteine attachment. Cys20 carries the S-diacylglycerol cysteine lipid modification.

The protein belongs to the NlpA lipoprotein family.

The protein resides in the cell outer membrane. The chain is Outer membrane lipoprotein 1 (plpA) from Mannheimia haemolytica (Pasteurella haemolytica).